Consider the following 270-residue polypeptide: Dehydrodolichyl diphosphate synthase (270 aa).

Belongs to the UPP synthase family.

It localises to the endoplasmic reticulum membrane. The protein operates within protein modification; protein glycosylation. Its function is as follows. Cis-prenyl transferase that adds multiple copies of isopentenyl pyrophosphate (IPP) to farnesyl pyrophosphate (FPP) to produce dehydrodolichyl diphosphate (Dedol-PP). The sequence is that of Dehydrodolichyl diphosphate synthase (RER2) from Encephalitozoon cuniculi (strain GB-M1) (Microsporidian parasite).